The following is a 207-amino-acid chain: Small ribosomal subunit protein uS4 (207 aa).

Positions 31 to 55 are disordered; it reads KCKLDSKPGQHGRTSGARTSDYGTQ. Polar residues predominate over residues 42 to 53; it reads GRTSGARTSDYG. An S4 RNA-binding domain is found at 97-160; the sequence is SRLDNVVYRM…KKQARIVEAL (64 aa).

The protein belongs to the universal ribosomal protein uS4 family. Part of the 30S ribosomal subunit. Contacts protein S5. The interaction surface between S4 and S5 is involved in control of translational fidelity.

In terms of biological role, one of the primary rRNA binding proteins, it binds directly to 16S rRNA where it nucleates assembly of the body of the 30S subunit. Its function is as follows. With S5 and S12 plays an important role in translational accuracy. The protein is Small ribosomal subunit protein uS4 of Burkholderia ambifaria (strain ATCC BAA-244 / DSM 16087 / CCUG 44356 / LMG 19182 / AMMD) (Burkholderia cepacia (strain AMMD)).